We begin with the raw amino-acid sequence, 876 residues long: Senescence-induced receptor-like serine/threonine-protein kinase (876 aa).

Positions 1-24 (MAMLKSLSSILFTSFALLFFLVHA) are cleaved as a signal peptide. Topologically, residues 25 to 517 (QDQSGFISID…SNTKKKNKNG (493 aa)) are extracellular. LRR repeat units follow at residues 415–438 (RVVS…SNLT), 439–462 (SIRK…ANLP), and 463–483 (NLTE…QRLH). Residues 518-538 (YIIPLVVVGIIVVLLTALALF) form a helical membrane-spanning segment. Residues 539–876 (RRFKKKQQRG…LDTEMVPRAR (338 aa)) are Cytoplasmic-facing. Residues 574 to 847 (NNFERVIGKG…VVMELKQIVY (274 aa)) enclose the Protein kinase domain. ATP is bound by residues 580 to 588 (IGKGGFGKV) and lysine 601. At tyrosine 646 the chain carries Phosphotyrosine. Aspartate 697 functions as the Proton acceptor in the catalytic mechanism. Serine 731 bears the Phosphoserine mark. Threonine 732 bears the Phosphothreonine mark. At tyrosine 745 the chain carries Phosphotyrosine.

Belongs to the protein kinase superfamily. Ser/Thr protein kinase family.

It localises to the membrane. In terms of biological role, involved in innate immune response of plants. This Arabidopsis thaliana (Mouse-ear cress) protein is Senescence-induced receptor-like serine/threonine-protein kinase (SIRK).